The following is a 354-amino-acid chain: Multiple sugar-binding periplasmic receptor ChvE (354 aa).

A signal peptide spans 1–25 (MKSIISLTAAAAIGVAMFVAPAFAA).

It belongs to the bacterial solute-binding protein 2 family.

Its subcellular location is the periplasm. Required for effective transcriptional induction of the vir genes by monosaccharides in response to plant signals and for normal growth and chemotaxis towards certain sugars. Functions as a periplasmic multiple sugar-binding receptor protein. It does not interact with a transport system. The polypeptide is Multiple sugar-binding periplasmic receptor ChvE (chvE) (Rhizobium radiobacter (Agrobacterium tumefaciens)).